The following is a 125-amino-acid chain: Small ribosomal subunit protein uS12 (125 aa).

D89 carries the post-translational modification 3-methylthioaspartic acid. The interval G100–A125 is disordered. Basic residues predominate over residues K111–A125.

It belongs to the universal ribosomal protein uS12 family. As to quaternary structure, part of the 30S ribosomal subunit. Contacts proteins S8 and S17. May interact with IF1 in the 30S initiation complex.

With S4 and S5 plays an important role in translational accuracy. Functionally, interacts with and stabilizes bases of the 16S rRNA that are involved in tRNA selection in the A site and with the mRNA backbone. Located at the interface of the 30S and 50S subunits, it traverses the body of the 30S subunit contacting proteins on the other side and probably holding the rRNA structure together. The combined cluster of proteins S8, S12 and S17 appears to hold together the shoulder and platform of the 30S subunit. This Thioalkalivibrio sulfidiphilus (strain HL-EbGR7) protein is Small ribosomal subunit protein uS12.